Consider the following 331-residue polypeptide: 6-phosphogluconolactonase (331 aa).

Lys-287 bears the N6-acetyllysine mark.

Belongs to the cycloisomerase 2 family.

The catalysed reaction is 6-phospho-D-glucono-1,5-lactone + H2O = 6-phospho-D-gluconate + H(+). Its pathway is carbohydrate degradation; pentose phosphate pathway; D-ribulose 5-phosphate from D-glucose 6-phosphate (oxidative stage): step 2/3. Its function is as follows. Catalyzes the hydrolysis of 6-phosphogluconolactone to 6-phosphogluconate. In Escherichia coli O7:K1 (strain IAI39 / ExPEC), this protein is 6-phosphogluconolactonase.